The chain runs to 173 residues: MCGMRILGLDPGVAILGYGVLDFFDSAPPVVCDYGIVQTSAKTAFEARLAAIYEDINSLFSAHKPDLVAIEKLFFYKMGNTISVAQARGVVLLCAAQHGVPYVEFSPPQVKLALTGDGRADKRAIQEAVQRELGLITMPKPDDAADALAIALTGWFHHLPPAAREAVPAYSVG.

Active-site residues include Asp-10, Glu-71, and Asp-143. Positions 10, 71, and 143 each coordinate Mg(2+).

The protein belongs to the RuvC family. Homodimer which binds Holliday junction (HJ) DNA. The HJ becomes 2-fold symmetrical on binding to RuvC with unstacked arms; it has a different conformation from HJ DNA in complex with RuvA. In the full resolvosome a probable DNA-RuvA(4)-RuvB(12)-RuvC(2) complex forms which resolves the HJ. Requires Mg(2+) as cofactor.

Its subcellular location is the cytoplasm. It catalyses the reaction Endonucleolytic cleavage at a junction such as a reciprocal single-stranded crossover between two homologous DNA duplexes (Holliday junction).. The RuvA-RuvB-RuvC complex processes Holliday junction (HJ) DNA during genetic recombination and DNA repair. Endonuclease that resolves HJ intermediates. Cleaves cruciform DNA by making single-stranded nicks across the HJ at symmetrical positions within the homologous arms, yielding a 5'-phosphate and a 3'-hydroxyl group; requires a central core of homology in the junction. The consensus cleavage sequence is 5'-(A/T)TT(C/G)-3'. Cleavage occurs on the 3'-side of the TT dinucleotide at the point of strand exchange. HJ branch migration catalyzed by RuvA-RuvB allows RuvC to scan DNA until it finds its consensus sequence, where it cleaves and resolves the cruciform DNA. The polypeptide is Crossover junction endodeoxyribonuclease RuvC (Gloeobacter violaceus (strain ATCC 29082 / PCC 7421)).